The chain runs to 210 residues: Glutathione S-transferase P 2 (210 aa).

The GST N-terminal domain occupies 2-81; the sequence is PPYTIVYFPS…HLGRSLGLYG (80 aa). Glutathione-binding positions include tyrosine 8, arginine 14, tryptophan 39, lysine 45, 52–53, and 65–66; these read QL and QS. Residues 83 to 204 enclose the GST C-terminal domain; that stretch reads NQREAAQVDM…SSPEHVNRPI (122 aa).

This sequence belongs to the GST superfamily. Pi family. In terms of assembly, homodimer. Selectively expressed in gall bladder, colon, heart, and skeletal muscle.

The enzyme catalyses RX + glutathione = an S-substituted glutathione + a halide anion + H(+). Functionally, conjugation of reduced glutathione to a wide number of exogenous and endogenous hydrophobic electrophiles. Cannot metabolize 1-chloro-2,4-dinitrobenzene. The polypeptide is Glutathione S-transferase P 2 (Gstp2) (Mus musculus (Mouse)).